The following is a 348-amino-acid chain: MKKRIILLLAVIIAAAAAGVAFYVAKDKGHEKAADVSVNTESGDELLVSITDTDLLTKYYENDKVIHEEKLTSYPAFALDQKQQVLYYTGNNEQNEMRLFKLDLKSHKKTMLYKGAESADSLFLSKDRSTIYFRLGKADESNFRIAAFDLKTKKYKNLYPAANDQDDTVSSFFYNQKNDSFALLHYSVEEDYKKTDEANEKGIDPEPTTIHFAEGRQNKFNELKSLNQFISDIAVSDDDKRILFTSYTQKGTEQTASIQMLNADTKKYESIISNQKSFKLLIDAQPQFSKDGKNIYFLAEAKGAKKLKDETGREAKVRTIYSYSLENKTFKKVWENPNGIINSFFVIN.

Positions 1 to 26 (MKKRIILLLAVIIAAAAAGVAFYVAK) are cleaved as a signal peptide.

This is an uncharacterized protein from Bacillus subtilis (strain 168).